The following is a 592-amino-acid chain: ATP-dependent lipid A-core flippase (592 aa).

The next 6 membrane-spanning stretches (helical) occupy residues 31 to 51 (LSSF…EGII), 76 to 96 (AMLV…TYFL), 134 to 154 (AVIF…ITLV), 161 to 181 (LALL…VAVI), 261 to 281 (VTQF…MVQA), and 288 to 308 (VGGF…LKHL). The region spanning 35–317 (ILAMVAMGVV…LTDVNQPMQR (283 aa)) is the ABC transmembrane type-1 domain. The ABC transporter domain maps to 349–587 (LRFEHVTFRY…DGLYAGLHRI (239 aa)). Residue 383–390 (GPSGSGKT) coordinates ATP.

This sequence belongs to the ABC transporter superfamily. Lipid exporter (TC 3.A.1.106) family. In terms of assembly, homodimer.

It is found in the cell inner membrane. It carries out the reaction ATP + H2O + lipid A-core oligosaccharideSide 1 = ADP + phosphate + lipid A-core oligosaccharideSide 2.. Involved in lipopolysaccharide (LPS) biosynthesis. Translocates lipid A-core from the inner to the outer leaflet of the inner membrane. Transmembrane domains (TMD) form a pore in the inner membrane and the ATP-binding domain (NBD) is responsible for energy generation. The protein is ATP-dependent lipid A-core flippase of Ralstonia nicotianae (strain ATCC BAA-1114 / GMI1000) (Ralstonia solanacearum).